Consider the following 533-residue polypeptide: UDP-glucuronosyltransferase 1A1 (533 aa).

A signal peptide spans 1–25 (MAVESQGGRPLVLGLLLCVLGPVVS). N-linked (GlcNAc...) asparagine glycosylation is found at asparagine 102, asparagine 295, and asparagine 347. A helical transmembrane segment spans residues 491 to 507 (VIGFLLAVVLTVAFITF).

This sequence belongs to the UDP-glycosyltransferase family. In terms of assembly, homodimer. Homooligomer. Interacts with UGT1A3, UGT1A4, UGT1A6, UGT1A7, UGT1A8, UGT1A9 and UGT1A10 to form heterodimers. Isoform 1 interacts with isoform 2/i2 suggesting that oligomerization is involved in negative regulation of transferase activity by isoform 2. Isoform 1 also interacts with respective i2 isoforms of UGT1A3, UGT1A4, UGT1A6, UGT1A7, UGT1A8, UGT1A9 and UGT1A10. In terms of tissue distribution, expressed in liver, colon and small intestine. Not expressed in kidney, esophagus and skin. Expressed in liver, colon, small intestine and kidney. Not expressed in esophagus and skin.

The protein resides in the endoplasmic reticulum membrane. It localises to the cytoplasm. It is found in the perinuclear region. It catalyses the reaction glucuronate acceptor + UDP-alpha-D-glucuronate = acceptor beta-D-glucuronoside + UDP + H(+). It carries out the reaction 17beta-estradiol + UDP-alpha-D-glucuronate = 17beta-estradiol 3-O-(beta-D-glucuronate) + UDP + H(+). The catalysed reaction is 2-hydroxyestrone + UDP-alpha-D-glucuronate = 2-hydroxyestrone 3-O-(beta-D-glucuronate) + UDP + H(+). The enzyme catalyses 2-hydroxy-17beta-estradiol + UDP-alpha-D-glucuronate = 2-hydroxy-17beta-estradiol 3-O-(beta-D-glucuronate) + UDP + H(+). It catalyses the reaction 2-methoxy-17beta-estradiol + UDP-alpha-D-glucuronate = 2-methoxy-17beta-estradiol 3-O-(beta-D-glucuronate) + UDP + H(+). It carries out the reaction 17alpha-estradiol + UDP-alpha-D-glucuronate = 17alpha-estradiol 3-O-(beta-D-glucuronate) + UDP + H(+). The catalysed reaction is 16beta,17beta-estriol + UDP-alpha-D-glucuronate = 16beta,17beta-estriol 16-O-(beta-D-glucuronate) + UDP + H(+). The enzyme catalyses losartan + UDP-alpha-D-glucuronate = losartan-2-N-beta-D-glucuronide + UDP. It catalyses the reaction prunetin + UDP-alpha-D-glucuronate = prunetin-4'-O-beta-D-glucuronide + UDP. It carries out the reaction SN-38 + UDP-alpha-D-glucuronate = SN-38 O-beta-D-glucuronide + UDP + H(+). The catalysed reaction is (4Z,15Z)-bilirubin IXalpha + UDP-alpha-D-glucuronate = (4Z,15Z)-bilirubin IXalpha C12-beta-D-glucuronoside + UDP. The enzyme catalyses (4Z,15Z)-bilirubin IXalpha + UDP-alpha-D-glucuronate = (4Z,15Z)-bilirubin IXalpha C8-beta-D-glucuronoside + UDP. It catalyses the reaction (4Z,15Z)-bilirubin IXalpha C8-beta-D-glucuronoside + UDP-alpha-D-glucuronate = (4Z,15Z)-bilirubin IXalpha C8,C12-beta-D-bisglucuronoside + UDP. It carries out the reaction (4Z,15Z)-bilirubin IXalpha C12-beta-D-glucuronoside + UDP-alpha-D-glucuronate = (4Z,15Z)-bilirubin IXalpha C8,C12-beta-D-bisglucuronoside + UDP. The catalysed reaction is 8-iso-prostaglandin F2alpha + UDP-alpha-D-glucuronate = 8-iso-prostaglandin F2alpha-glucuronide + UDP + H(+). The enzyme catalyses (5Z,8Z,11Z,14Z)-eicosatetraenoate + UDP-alpha-D-glucuronate = O-[(5Z),(8Z),(11Z),(14Z)-eicosatetraenoyl]-beta-D-glucuronate + UDP. It catalyses the reaction 15-hydroxy-(5Z,8Z,11Z,13E)-eicosatetraenoate + UDP-alpha-D-glucuronate = 15-O-(beta-D-glucuronosyl)-(5Z,8Z,11Z,14Z)-eicosatetraenoate + UDP + H(+). It carries out the reaction 20-hydroxy-(5Z,8Z,11Z,14Z)-eicosatetraenoate + UDP-alpha-D-glucuronate = 20-O-(beta-D-glucuronosyl)-(5Z,8Z,11Z,14Z)-eicosatetraenoate + UDP + H(+). The catalysed reaction is prostaglandin B1 + UDP-alpha-D-glucuronate = 15-O-(beta-D-glucuronosyl)-prostaglandin B1 + UDP + H(+). The enzyme catalyses (E)-ferulate + UDP-alpha-D-glucuronate = (E)-4-O-(beta-D-glucuronosyl)-ferulate + UDP + H(+). It catalyses the reaction (E)-ferulate + UDP-alpha-D-glucuronate = (E)-ferulic acid beta-D-glucuronate ester + UDP. UDP-glucuronosyltransferase (UGT) that catalyzes phase II biotransformation reactions in which lipophilic substrates are conjugated with glucuronic acid to increase the metabolite's water solubility, thereby facilitating excretion into either the urine or bile. Essential for the elimination and detoxification of drugs, xenobiotics and endogenous compounds. Catalyzes the glucuronidation of endogenous estrogen hormones such as estradiol, estrone and estriol. Involved in the glucuronidation of bilirubin, a degradation product occurring in the normal catabolic pathway that breaks down heme in vertebrates. Involved in the glucuronidation of arachidonic acid (AA) and AA-derived eicosanoids including 15-HETE, 20-HETE, PGB1 and F2-isoprostane (8-iso-PGF2alpha). Involved in the glucuronidation of the phytochemical ferulic acid at the phenolic or the carboxylic acid group. Also catalyzes the glucuronidation the isoflavones genistein, daidzein, glycitein, formononetin, biochanin A and prunetin, which are phytoestrogens with anticancer and cardiovascular properties. Involved in the glucuronidation of the AGTR1 angiotensin receptor antagonist losartan, a drug which can inhibit the effect of angiotensin II. Involved in the biotransformation of 7-ethyl-10-hydroxycamptothecin (SN-38), the pharmacologically active metabolite of the anticancer drug irinotecan. In terms of biological role, lacks UGT glucuronidation activity but acts as a negative regulator of isoform 1. The sequence is that of UDP-glucuronosyltransferase 1A1 from Homo sapiens (Human).